The chain runs to 117 residues: Structural toxin peptide sea anemone type 9a (117 aa).

An N-terminal signal peptide occupies residues 1–23 (MKTIIAIFSLAAMIVLVRPTPLE). Repeat copies occupy residues 28–56 (TRSIINVPCKKCYKKDSNGVCRKIFGCQE), 57–88 (KRNIIDPPCRKCYKKDSNNKCVRIAGCGNEAV), and 89–117 (KRAIINPQGCARCHKPDPNGKCRKIHGCS). The segment at 29–117 (RSIINVPCKK…GKCRKIHGCS (89 aa)) is 3 X approximate tandem repeats.

Post-translationally, contains 6 disulfide bonds. As to expression, expressed outside of acontia.

It is found in the secreted. Its subcellular location is the nematocyst. Functionally, putative neurotoxin. This Calliactis polypus (Hermit crab anemone) protein is Structural toxin peptide sea anemone type 9a.